A 1220-amino-acid polypeptide reads, in one-letter code: Protein transport protein Sec31A (1220 aa).

WD repeat units follow at residues 4-47 (KEVD…EIFE), 68-111 (RYHK…AGDK), 120-160 (KHTG…TPMT), 166-206 (QPPE…PIIK), 209-254 (DHSN…SPLR), 258-298 (NHAR…VLYE), and 301-342 (TNTQ…DGLR). The interaction with SEC13 stretch occupies residues 161 to 471 (PGAKTQPPED…IDASQTEFEK (311 aa)). A WD 8; interaction with SEC13 repeat occupies 397 to 430 (SFSFGGKLVTFENVRMPSHQGAEQQQQQHHVFIS). Ser-527 and Ser-532 each carry phosphoserine. A Glycyl lysine isopeptide (Lys-Gly) (interchain with G-Cter in ubiquitin) cross-link involves residue Lys-647. 2 disordered regions span residues 791 to 908 (GEPV…NAYP) and 924 to 1096 (QLYA…GNTF). Position 799 is a phosphoserine (Ser-799). The tract at residues 800-1113 (PKIPYEKQQL…TKKITKKPIP (314 aa)) is interaction with PDCD6. The ALG-2-binding site motif-2 (ABS-2) motif lies at 842–848 (GFIMHGN). Residues 849-859 (VNPNAAGQLPT) are compositionally biased toward polar residues. Residues 869 to 882 (PPYPQPQPYQPAQP) show a composition bias toward pro residues. The span at 962 to 972 (PSSSAYALPPG) shows a compositional bias: low complexity. Polar residues-rich tracts occupy residues 984 to 995 (PASQRTGPQNGW) and 1031 to 1053 (PQSQ…SSFP). Phosphothreonine is present on Thr-1161. Phosphoserine is present on Ser-1163. A Glycyl lysine isopeptide (Lys-Gly) (interchain with G-Cter in ubiquitin) cross-link involves residue Lys-1217.

It belongs to the WD repeat SEC31 family. As to quaternary structure, COPII is composed of at least 5 proteins: the SEC23/24 complex, the SEC13/31 complex and SAR1. SEC13 and SEC31 make a 2:2 tetramer that forms the edge element of the COPII outer coat. The tetramer self-assembles in multiple copies to form the complete polyhedral cage. Interacts (via WD 8) with SEC13. Interacts with PDCD6; interaction takes place in response to cytosolic calcium increase and leads to bridge together the BCR(KLHL12) complex and SEC31A, leading to monoubiquitination. Interacts with KLHL12. In terms of processing, monoubiquitinated by the BCR(KLHL12) E3 ubiquitin ligase complex, leading to regulate the size of COPII coats. In terms of tissue distribution, abundantly and ubiquitously expressed.

It localises to the cytoplasm. Its subcellular location is the cytoplasmic vesicle. The protein resides in the COPII-coated vesicle membrane. The protein localises to the endoplasmic reticulum membrane. It is found in the cytosol. Its function is as follows. Component of the coat protein complex II (COPII) which promotes the formation of transport vesicles from the endoplasmic reticulum (ER). The coat has two main functions, the physical deformation of the endoplasmic reticulum membrane into vesicles and the selection of cargo molecules. This chain is Protein transport protein Sec31A (SEC31A), found in Homo sapiens (Human).